A 241-amino-acid polypeptide reads, in one-letter code: MNIIEFEDKEQLGKEAAALIARTIASKPDAVLGLATGGTPLDTYQELIHLYQSQQLSFKQTKTVNLDEYAGLDPDHENSYMTYMKRHLFDHIDLPQDQYFLPNGASPDLEKECLRYDQLIQDIGGIDLQLLGIGQNGHIGFNEPGTPFNSMTHVVQLDENTRQANARYFSSIDEVPTHAITMGIASILSSKKILLLASGKSKAKVIQYLEQTEIHPDFPASALKLHEDVTILIDREAGSLR.

Catalysis depends on Asp-67, which acts as the Proton acceptor; for enolization step. The For ring-opening step role is filled by Asn-136. Catalysis depends on His-138, which acts as the Proton acceptor; for ring-opening step. The active-site For ring-opening step is the Glu-143.

This sequence belongs to the glucosamine/galactosamine-6-phosphate isomerase family. NagB subfamily.

It catalyses the reaction alpha-D-glucosamine 6-phosphate + H2O = beta-D-fructose 6-phosphate + NH4(+). The protein operates within amino-sugar metabolism; N-acetylneuraminate degradation; D-fructose 6-phosphate from N-acetylneuraminate: step 5/5. Its function is as follows. Catalyzes the reversible isomerization-deamination of glucosamine 6-phosphate (GlcN6P) to form fructose 6-phosphate (Fru6P) and ammonium ion. The polypeptide is Glucosamine-6-phosphate deaminase (Bacillus pumilus (strain SAFR-032)).